The following is a 1642-amino-acid chain: DNA-directed RNA polymerase I subunit RPA1 (1642 aa).

Residues Cys66, Cys69, Cys75, and His78 each coordinate Zn(2+). Mg(2+) is bound by residues Asp565, Asp567, and Asp569. Residues 939–951 (PQDFFFHCMAGRE) form a bridging helix region. A disordered region spans residues 1337-1428 (DADKDDDNDL…GNDNDGDDKA (92 aa)). A compositionally biased stretch (acidic residues) spans 1340–1350 (KDDDNDLDNGD). The segment covering 1351–1361 (EVGRSKAKAND) has biased composition (basic and acidic residues). Composition is skewed to acidic residues over residues 1362-1373 (DDSSDDNDDDDA) and 1386-1424 (KDYD…DNDG). A phosphoserine mark is found at Ser1364 and Ser1365.

This sequence belongs to the RNA polymerase beta' chain family. Component of the RNA polymerase I (Pol I) complex consisting of at least 13 subunits. In terms of processing, phosphorylated.

Its subcellular location is the nucleus. The protein resides in the nucleolus. The catalysed reaction is RNA(n) + a ribonucleoside 5'-triphosphate = RNA(n+1) + diphosphate. Its function is as follows. DNA-dependent RNA polymerase catalyzes the transcription of DNA into RNA using the four ribonucleoside triphosphates as substrates. Largest and catalytic core component of RNA polymerase I which synthesizes ribosomal RNA precursors. Forms the polymerase active center together with the second largest subunit. A single stranded DNA template strand of the promoter is positioned within the central active site cleft of Pol I. A bridging helix emanates from RPA1 and crosses the cleft near the catalytic site and is thought to promote translocation of Pol I by acting as a ratchet that moves the RNA-DNA hybrid through the active site by switching from straight to bent conformations at each step of nucleotide addition. The protein is DNA-directed RNA polymerase I subunit RPA1 (RpI1) of Drosophila melanogaster (Fruit fly).